The following is a 184-amino-acid chain: Peptidyl-tRNA hydrolase (184 aa).

TRNA is bound at residue tyrosine 14. Residue histidine 19 is the Proton acceptor of the active site. TRNA-binding residues include phenylalanine 64, asparagine 66, and asparagine 112.

It belongs to the PTH family. Monomer.

It localises to the cytoplasm. It carries out the reaction an N-acyl-L-alpha-aminoacyl-tRNA + H2O = an N-acyl-L-amino acid + a tRNA + H(+). Hydrolyzes ribosome-free peptidyl-tRNAs (with 1 or more amino acids incorporated), which drop off the ribosome during protein synthesis, or as a result of ribosome stalling. Its function is as follows. Catalyzes the release of premature peptidyl moieties from peptidyl-tRNA molecules trapped in stalled 50S ribosomal subunits, and thus maintains levels of free tRNAs and 50S ribosomes. This Thermoanaerobacter sp. (strain X514) protein is Peptidyl-tRNA hydrolase.